A 677-amino-acid polypeptide reads, in one-letter code: DNA ligase (677 aa).

Residues 34-38 (DAEYD), 83-84 (SL), and Glu117 contribute to the NAD(+) site. Lys119 acts as the N6-AMP-lysine intermediate in catalysis. Positions 140, 175, 283, and 307 each coordinate NAD(+). 4 residues coordinate Zn(2+): Cys401, Cys404, Cys419, and Cys425. In terms of domain architecture, BRCT spans 594 to 677 (SHLSLLHGKT…QYISPNTNEN (84 aa)).

It belongs to the NAD-dependent DNA ligase family. LigA subfamily. It depends on Mg(2+) as a cofactor. The cofactor is Mn(2+).

It catalyses the reaction NAD(+) + (deoxyribonucleotide)n-3'-hydroxyl + 5'-phospho-(deoxyribonucleotide)m = (deoxyribonucleotide)n+m + AMP + beta-nicotinamide D-nucleotide.. Functionally, DNA ligase that catalyzes the formation of phosphodiester linkages between 5'-phosphoryl and 3'-hydroxyl groups in double-stranded DNA using NAD as a coenzyme and as the energy source for the reaction. It is essential for DNA replication and repair of damaged DNA. In Ehrlichia canis (strain Jake), this protein is DNA ligase.